The chain runs to 228 residues: Ribose-5-phosphate isomerase A (228 aa).

Substrate-binding positions include 32 to 35, 85 to 88, and 98 to 101; these read TGST, DGAD, and KGGG. Glutamate 107 (proton acceptor) is an active-site residue. A substrate-binding site is contributed by lysine 125.

This sequence belongs to the ribose 5-phosphate isomerase family. In terms of assembly, homodimer.

It carries out the reaction aldehydo-D-ribose 5-phosphate = D-ribulose 5-phosphate. Its pathway is carbohydrate degradation; pentose phosphate pathway; D-ribose 5-phosphate from D-ribulose 5-phosphate (non-oxidative stage): step 1/1. In terms of biological role, catalyzes the reversible conversion of ribose-5-phosphate to ribulose 5-phosphate. In Ralstonia pickettii (strain 12J), this protein is Ribose-5-phosphate isomerase A.